We begin with the raw amino-acid sequence, 194 residues long: Ribosomal RNA large subunit methyltransferase E (194 aa).

Residues Gly48, Trp50, Asp66, Asn82, and Asp110 each coordinate S-adenosyl-L-methionine. The active-site Proton acceptor is the Lys150.

This sequence belongs to the class I-like SAM-binding methyltransferase superfamily. RNA methyltransferase RlmE family.

The protein localises to the cytoplasm. It catalyses the reaction uridine(2552) in 23S rRNA + S-adenosyl-L-methionine = 2'-O-methyluridine(2552) in 23S rRNA + S-adenosyl-L-homocysteine + H(+). Its function is as follows. Specifically methylates the uridine in position 2552 of 23S rRNA at the 2'-O position of the ribose in the fully assembled 50S ribosomal subunit. This is Ribosomal RNA large subunit methyltransferase E from Picrophilus torridus (strain ATCC 700027 / DSM 9790 / JCM 10055 / NBRC 100828 / KAW 2/3).